The chain runs to 68 residues: Protein ShdD (68 aa).

Involved in the non-oxidative decarboxylation and detoxification of phenolic derivatives under anaerobic conditions, however the precise biochemical function of ShdD in metabolism of phenolic acid is unknown. In Sedimentibacter hydroxybenzoicus (Clostridium hydroxybenzoicum), this protein is Protein ShdD.